A 401-amino-acid chain; its full sequence is Short chain dehydrogenase/reductase dpchH (401 aa).

Asparagine 16 carries an N-linked (GlcNAc...) asparagine glycan. The chain crosses the membrane as a helical span at residues 51-71; it reads VRAVDVLFGTFLYVPLGILFL. Residues 72 to 80, 99 to 100, and 118 to 120 contribute to the NAD(+) site; these read KKSLSGFGD, TG, and AKV. The N-linked (GlcNAc...) asparagine glycan is linked to asparagine 242. Tyrosine 275 (proton acceptor) is an active-site residue. NAD(+) is bound by residues 275–279 and 308–310; these read YGTSK and GTI. An N-linked (GlcNAc...) asparagine glycan is attached at asparagine 386.

The protein resides in the membrane. Its pathway is secondary metabolite biosynthesis; terpenoid biosynthesis. Short chain dehydrogenase/reductase; part of the gene cluster that mediates the biosynthesis of the diterpenoid pyrones higginsianins A and B. The first step of the pathway is the synthesis of the alpha-pyrone moiety by the polyketide synthase dpchA via condensation of one acetyl-CoA starter unit with 3 malonyl-CoA units and 2 methylations. The alpha-pyrone is then combined with geranylgeranyl pyrophosphate (GGPP) formed by the GGPP synthase dpchD through the action of the prenyltransferase dpchC to yield a linear alpha-pyrone diterpenoid. Subsequent steps in the diterpenoid pyrone biosynthetic pathway involve the decalin core formation, which is initiated by the epoxidation of the C10-C11 olefin by the FAD-dependent oxidoreductase dpchE, and is followed by a cyclization cascade catalyzed by the terpene cyclase dpchB. The short chain dehydrogenase/reductase dpchG then oxidizes the 8S hydroxy group to a ketone and the short chain dehydrogenase/reductase dpchH reduces the ketone to the 8R hydroxy group to yield higginsianin B. Finally, the FAD-dependent oxidoreductase dpchF converts higginsianin B into higginsianin A. In Colletotrichum higginsianum (strain IMI 349063) (Crucifer anthracnose fungus), this protein is Short chain dehydrogenase/reductase dpchH.